A 71-amino-acid chain; its full sequence is MAILKASEIRELSAEEMKGKIAELKRELMKEGVNKSTGGAPSNPGKISEIKRTIARILTIMNEKEAQAKNA.

This sequence belongs to the universal ribosomal protein uL29 family.

The polypeptide is Large ribosomal subunit protein uL29 (Methanococcus maripaludis (strain C7 / ATCC BAA-1331)).